Here is a 285-residue protein sequence, read N- to C-terminus: Extracellular metalloprotease NCU07200 (285 aa).

An N-terminal signal peptide occupies residues 1-18; that stretch reads MQIKSFLLAAAAAPAALG. Zn(2+) is bound at residue His-197. Residue Glu-198 is part of the active site. Residue His-201 participates in Zn(2+) binding. An intrachain disulfide couples Cys-233 to Cys-260. A glycan (N-linked (GlcNAc...) asparagine) is linked at Asn-282.

The protein belongs to the peptidase M43B family.

Its subcellular location is the secreted. Secreted metalloproteinase that allows assimilation of proteinaceous substrates. This chain is Extracellular metalloprotease NCU07200, found in Neurospora crassa (strain ATCC 24698 / 74-OR23-1A / CBS 708.71 / DSM 1257 / FGSC 987).